Consider the following 268-residue polypeptide: Putative hydro-lyase A1S_1268 (268 aa).

This sequence belongs to the D-glutamate cyclase family.

This chain is Putative hydro-lyase A1S_1268, found in Acinetobacter baumannii (strain ATCC 17978 / DSM 105126 / CIP 53.77 / LMG 1025 / NCDC KC755 / 5377).